The chain runs to 284 residues: Tropomyosin (284 aa).

Residues Met-1–Tyr-284 are a coiled coil. The segment at Thr-111–Glu-131 is disordered.

This sequence belongs to the tropomyosin family. Homodimer.

Its function is as follows. Tropomyosin, in association with the troponin complex, plays a central role in the calcium dependent regulation of muscle contraction. The chain is Tropomyosin from Schistosoma japonicum (Blood fluke).